We begin with the raw amino-acid sequence, 92 residues long: Large ribosomal subunit protein eL31 (92 aa).

It belongs to the eukaryotic ribosomal protein eL31 family.

The polypeptide is Large ribosomal subunit protein eL31 (Halobacterium salinarum (strain ATCC 29341 / DSM 671 / R1)).